Here is a 351-residue protein sequence, read N- to C-terminus: Secreted frizzled-related sequence protein 4 (351 aa).

The N-terminal stretch at Met1–Gly18 is a signal peptide. Residues Val19–Pro139 enclose the FZ domain. 5 cysteine pairs are disulfide-bonded: Cys24–Cys85, Cys32–Cys78, Cys69–Cys108, Cys97–Cys136, and Cys101–Cys125. N-linked (GlcNAc...) asparagine glycosylation is found at Asn38 and Asn68. N-linked (GlcNAc...) asparagine glycosylation is found at Asn116, Asn194, and Asn240. An NTR domain is found at Cys178–Ser306. The span at Glu293–Gln303 shows a compositional bias: basic and acidic residues. The tract at residues Glu293–Ser351 is disordered. Over residues Ser306–Lys318 the composition is skewed to low complexity. Positions Lys333–Ser351 are enriched in basic residues.

It belongs to the secreted frizzled-related protein (sFRP) family. In terms of tissue distribution, expressed in the ovary. Localized to granulosa cells of periovulatory follicles and corpora lutea. Weakly expressed in adult tissues including kidney, brain and lung.

It is found in the secreted. Soluble frizzled-related proteins (sFRPS) function as modulators of Wnt signaling through direct interaction with Wnts. They have a role in regulating cell growth and differentiation in specific cell types. SFRP4 plays a role in bone morphogenesis. May also act as a regulator of adult uterine morphology and function. May also increase apoptosis during ovulation possibly through modulation of FZ1/FZ4/WNT4 signaling. Has phosphaturic effects by specifically inhibiting sodium-dependent phosphate uptake. This Mus musculus (Mouse) protein is Secreted frizzled-related sequence protein 4 (Sfrp4).